An 81-amino-acid chain; its full sequence is UPF0434 protein msl4429 (81 aa).

It belongs to the UPF0434 family.

This chain is UPF0434 protein msl4429, found in Mesorhizobium japonicum (strain LMG 29417 / CECT 9101 / MAFF 303099) (Mesorhizobium loti (strain MAFF 303099)).